A 253-amino-acid chain; its full sequence is UPF0246 protein LBA1843 (253 aa).

This sequence belongs to the UPF0246 family.

In Lactobacillus acidophilus (strain ATCC 700396 / NCK56 / N2 / NCFM), this protein is UPF0246 protein LBA1843.